The following is a 289-amino-acid chain: Glycine--tRNA ligase alpha subunit (289 aa).

This sequence belongs to the class-II aminoacyl-tRNA synthetase family. Tetramer of two alpha and two beta subunits.

It localises to the cytoplasm. It carries out the reaction tRNA(Gly) + glycine + ATP = glycyl-tRNA(Gly) + AMP + diphosphate. The chain is Glycine--tRNA ligase alpha subunit from Prochlorococcus marinus subsp. pastoris (strain CCMP1986 / NIES-2087 / MED4).